The sequence spans 461 residues: Propanal dehydrogenase (CoA-propanoylating) (461 aa).

Residues 1–18 are targets protein to the BMC; it reads MNTSELETLIRNILSEQL.

Belongs to the EutE/PduP family. As to quaternary structure, interacts with PduK, probably with its BMC-containing N-terminus. Interacts with shell proteins PduA and PduJ, interacts with PduQ.

It is found in the bacterial microcompartment. It catalyses the reaction propanal + NAD(+) + CoA = propanoyl-CoA + NADH + H(+). It participates in polyol metabolism; 1,2-propanediol degradation. Functionally, a CoA-acylating aldehyde dehydrogenase required for optimal 1,2-propanediol (1,2-PD) degradation. Optimizes growth in the bacterial microcompartment (BMC) dedicated to 1,2-PD degradation by minimizing propionaldehyde toxicity. NAD(+) and NADH are regenerated internally within the Pdu BMC by the PduP and PduQ enzymes, which reduce NAD(+) and oxidize NADH respectively, although there must also be cofactor transport across the BMC. Directly targeted to the BMC. Its function is as follows. Expression of a cosmid containing the full 21-gene pdu operon in E.coli allows E.coli to grow on 1,2-propanediol (1,2-PD) with the appearance of bacterial microcompartments (BMC) in its cytoplasm. In terms of biological role, the 1,2-PD-specific bacterial microcompartment (BMC) concentrates low levels of 1,2-PD catabolic enzymes, concentrates volatile reaction intermediates thus enhancing pathway flux and keeps the level of toxic, mutagenic propionaldehyde low. This Citrobacter freundii protein is Propanal dehydrogenase (CoA-propanoylating).